A 73-amino-acid polypeptide reads, in one-letter code: MAINREILAKSDIKVEVELKRSLIGKLDSKVKTLKALGLKRIGDRKIHVLNKSLQGMLNSVISMVLLSEVKNG.

The protein belongs to the universal ribosomal protein uL30 family. Part of the 50S ribosomal subunit.

The sequence is that of Large ribosomal subunit protein uL30 from Borrelia hermsii (strain HS1 / DAH).